The sequence spans 294 residues: MSKKDALSRFLFEKSAVRGELVTVTETYQSILENHHYPEPVQHLLGDLLVATSLLTATLKFDGDITVQLQGDGPVRLVVINGNNEQQMRGVARFSDDVKAGSSLKEMMGNGFMVITITPKKGERYQGIVALDGETIEACIDNYFNQSEQLPTRVFIRTGLQDGKAAGAGMLLQALPASAEHSADETAEHFELLTQLTHTIKAQELFTLDTKEILHRLYHEEDVTLYDPQPIAFHCTCSRKRCEDTLVTLSKEDVAHLLQEQGKIDMECEYCGAHYIFTEEDINNINKLSSSNLH.

Cystine bridges form between Cys-235–Cys-237 and Cys-268–Cys-271.

The protein belongs to the HSP33 family. Post-translationally, under oxidizing conditions two disulfide bonds are formed involving the reactive cysteines. Under reducing conditions zinc is bound to the reactive cysteines and the protein is inactive.

Its subcellular location is the cytoplasm. In terms of biological role, redox regulated molecular chaperone. Protects both thermally unfolding and oxidatively damaged proteins from irreversible aggregation. Plays an important role in the bacterial defense system toward oxidative stress. The protein is 33 kDa chaperonin of Proteus mirabilis (strain HI4320).